A 962-amino-acid polypeptide reads, in one-letter code: IQ motif and SEC7 domain-containing protein 1 (962 aa).

The disordered stretch occupies residues 1–96; it reads MACRRRYLSS…STSVLRKQAE (96 aa). Residues 8 to 19 are compositionally biased toward low complexity; it reads LSSLETGSSLST. The segment covering 30–39 has biased composition (polar residues); the sequence is SSETGTSLDS. Serine 89, serine 105, and serine 107 each carry phosphoserine. Residues 134–163 form the IQ domain; sequence TRHAARTIQTAFRQYQMNKNFERLRSSMSE. Serine 180, serine 248, and serine 252 each carry phosphoserine. Disordered regions lie at residues 264 to 292, 311 to 333, and 348 to 516; these read SEEV…HRKL, LSPP…DLRL, and KEDK…DSPA. Over residues 273-292 the composition is skewed to basic and acidic residues; it reads ARARDTEPKPGLHGMDHRKL. 2 stretches are compositionally biased toward basic and acidic residues: residues 365 to 375 and 429 to 445; these read ERPEPRLRVEH and LPRE…RPLE. Low complexity predominate over residues 470 to 488; the sequence is DSINSTSNSNDTINCSSES. Serine 511 and serine 514 each carry phosphoserine. One can recognise an SEC7 domain in the interval 516-709; the sequence is AFSNDVIRKR…IGIYERIRKR (194 aa). Residues 773 to 865 enclose the PH domain; sequence HQREIFLFND…LRESVAEVQE (93 aa). Serine 891 carries the phosphoserine modification. The residue at position 910 (tyrosine 910) is a Phosphotyrosine. Residues 921–962 are disordered; it reads LSSSLRDLSEAGKRGRRSSAGSLESNVEFQPFQPSQPPVLCS. Phosphoserine is present on residues serine 923 and serine 924. Residues 939-948 are compositionally biased toward polar residues; it reads SAGSLESNVE.

The protein belongs to the BRAG family. As to quaternary structure, interacts with ARF1 and ARF6. Interacts with GRIA2; the interaction is required for ARF6 activation.

Its subcellular location is the cytoplasm. It localises to the nucleus. The protein resides in the postsynaptic density. It is found in the cytoplasmic vesicle. The protein localises to the secretory vesicle. Its subcellular location is the synaptic vesicle. Its function is as follows. Guanine nucleotide exchange factor for ARF1 and ARF6. Guanine nucleotide exchange factor activity is enhanced by lipid binding. Accelerates GTP binding by ARFs of all three classes. Guanine nucleotide exchange protein for ARF6, mediating internalization of beta-1 integrin. Involved in neuronal development. In neurons, plays a role in the control of vesicle formation by endocytoc cargo. Upon long term depression, interacts with GRIA2 and mediates the activation of ARF6 to internalize synaptic AMPAR receptors. The protein is IQ motif and SEC7 domain-containing protein 1 of Rattus norvegicus (Rat).